The following is a 410-amino-acid chain: Arginine deiminase (410 aa).

Cys399 (amidino-cysteine intermediate) is an active-site residue.

The protein belongs to the arginine deiminase family.

The protein resides in the cytoplasm. The enzyme catalyses L-arginine + H2O = L-citrulline + NH4(+). The protein operates within amino-acid degradation; L-arginine degradation via ADI pathway; carbamoyl phosphate from L-arginine: step 1/2. The sequence is that of Arginine deiminase from Listeria monocytogenes serovar 1/2a (strain ATCC BAA-679 / EGD-e).